We begin with the raw amino-acid sequence, 173 residues long: Superoxide dismutase [Cu-Zn] (173 aa).

An N-terminal signal peptide occupies residues 1–19; the sequence is MKSLFIASTMVLMAFPAFA. Cu cation contacts are provided by His-67, His-69, and His-92. An intrachain disulfide couples Cys-74 to Cys-169. His-92, His-101, His-109, and Asp-112 together coordinate Zn(2+). Residue His-147 participates in Cu cation binding.

This sequence belongs to the Cu-Zn superoxide dismutase family. In terms of assembly, homodimer. Cu cation serves as cofactor. Requires Zn(2+) as cofactor.

The protein resides in the periplasm. It carries out the reaction 2 superoxide + 2 H(+) = H2O2 + O2. Destroys radicals which are normally produced within the cells and which are toxic to biological systems. This chain is Superoxide dismutase [Cu-Zn] (sodC), found in Brucella abortus biovar 1 (strain 9-941).